Here is a 172-residue protein sequence, read N- to C-terminus: CD164 sialomucin-like 2 protein (172 aa).

A signal peptide spans Met-1 to Ala-29. Residues Gly-30–Gly-137 lie on the Extracellular side of the membrane. N-linked (GlcNAc...) asparagine glycosylation is found at Asn-69 and Asn-101. The segment at Ala-108–Ser-132 is disordered. Residues Ala-138–Leu-158 form a helical membrane-spanning segment. The Cytoplasmic segment spans residues Arg-159–Ile-172.

The protein belongs to the CD164 family.

Its subcellular location is the membrane. The chain is CD164 sialomucin-like 2 protein (Cd164l2) from Mus musculus (Mouse).